Reading from the N-terminus, the 404-residue chain is Glucosyl-3-phosphoglycerate synthase (404 aa).

Residue D146 participates in a divalent metal cation binding. A (2R)-3-phosphoglycerate-binding site is contributed by G188–V190. Residue H270 coordinates a divalent metal cation.

It belongs to the glycosyltransferase 2 family. It depends on Mn(2+) as a cofactor. The cofactor is Co(2+). Requires Mg(2+) as cofactor.

It carries out the reaction an NDP-alpha-D-glucose + (2R)-3-phosphoglycerate = (2R)-2-O-(alpha-D-glucopyranosyl)-3-phospho-glycerate + a ribonucleoside 5'-diphosphate + H(+). Its function is as follows. Involved in the biosynthesis of 6-O-methylglucose lipopolysaccarides (MGLPs). Catalyzes the transfer of a glucose (Glc) moiety from uridine diphosphate (UDP-Glc) to the position 2 of 3-phospho-D-glycerate (3-PGA) to form glucosyl-3-phosphoglycerate (GPG). This Methanococcoides burtonii (strain DSM 6242 / NBRC 107633 / OCM 468 / ACE-M) protein is Glucosyl-3-phosphoglycerate synthase.